The following is a 347-amino-acid chain: Cyclic AMP-dependent transcription factor ATF-4 (347 aa).

The segment at 202 to 296 is disordered; that stretch reads TPQCVKEEDT…AATRYRQKKR (95 aa). At Thr211 the chain carries Phosphothreonine. 5 positions are modified to phosphoserine: Ser213, Ser217, Ser222, Ser229, and Ser233. Residues 213–222 carry the BetaTrCP degron motif motif; sequence SDSDSGICMS. Polar residues predominate over residues 228 to 238; sequence GSPQHSPSTSR. The residue at position 234 (Pro234) is a 4-hydroxyproline. A phosphoserine mark is found at Ser243 and Ser246. Residues Lys256 and Lys268 each participate in a glycyl lysine isopeptide (Lys-Gly) (interchain with G-Cter in SUMO2) cross-link. The span at 269-283 shows a compositional bias: basic and acidic residues; sequence VKTEKLDKKLKKMEQ. Positions 274 to 337 constitute a bZIP domain; it reads LDKKLKKMEQ…QYLKDLIEEV (64 aa). The segment at 276–296 is basic motif; the sequence is KKLKKMEQNKTAATRYRQKKR. Positions 301-337 are interaction with GABBR1; the sequence is ALTGECKELEKKNEALKEKADSLAKEIQYLKDLIEEV. The leucine-zipper stretch occupies residues 302 to 330; the sequence is LTGECKELEKKNEALKEKADSLAKEIQYL. Residue Lys307 is modified to N6-acetyllysine.

It belongs to the bZIP family. In terms of assembly, binds DNA as a homodimer and as a heterodimer. Heterodimer; heterodimerizes with CEBPB. Heterodimer; heterodimerizes with DDIT3/CHOP. Interacts with CEP290 (via an N-terminal region). Interacts with NEK6, DAPK2 (isoform 2) and ZIPK/DAPK3. Interacts (via its leucine zipper domain) with GABBR1 and GABBR2 (via their C-termini). Forms a heterodimer with TXLNG in osteoblasts. Interacts (via its DNA binding domain) with FOXO1 (C-terminal half); the interaction occurs in osteoblasts and regulates glucose homeostasis through suppression of beta-cell proliferation and a decrease in insulin production. Interacts with SATB2; the interaction results in enhanced DNA binding and transactivation by these transcription factors. Interacts with ABRAXAS2. Interacts with TRIB3, inhibiting the transactivation activity of ATF4. Interacts with DISC1; which inhibits ATF4 transcription factor activity by disrupting ATF4 dimerization and DNA-binding. Interacts with EP300/p300; EP300/p300 stabilizes ATF4 and increases its transcriptional activity independently of its catalytic activity by preventing its ubiquitination. Ubiquitinated by SCF(BTRC) in response to mTORC1 signal, followed by proteasomal degradation and leading to down-regulate expression of SIRT4. Interaction with EP300/p300 inhibits ubiquitination by SCF(BTRC). In terms of processing, phosphorylation at Ser-243 by RPS6KA3/RSK2 in osteoblasts enhances transactivation activity and promotes osteoblast differentiation. Phosphorylated on the betaTrCP degron motif at Ser-217, followed by phosphorylation at Thr-211, Ser-222, Ser-229, Ser-233 and Ser-246, promoting interaction with BTRC and ubiquitination. Phosphorylation is promoted by mTORC1. Phosphorylation at Ser-213 by CK2 decreases its stability. Phosphorylated by NEK6. Post-translationally, hydroxylated by PHD3, leading to decreased protein stability. In terms of tissue distribution, expressed in brain, heart, liver, spleen, lung and muscle, but not testis.

It is found in the nucleus. It localises to the nucleus speckle. The protein resides in the cytoplasm. The protein localises to the cell membrane. Its subcellular location is the cytoskeleton. It is found in the microtubule organizing center. It localises to the centrosome. Functionally, transcription factor that binds the cAMP response element (CRE) (consensus: 5'-GTGACGT[AC][AG]-3') and displays two biological functions, as regulator of metabolic and redox processes under normal cellular conditions, and as master transcription factor during integrated stress response (ISR). Binds to asymmetric CRE's as a heterodimer and to palindromic CRE's as a homodimer. Core effector of the ISR, which is required for adaptation to various stress such as endoplasmic reticulum (ER) stress, amino acid starvation, mitochondrial stress or oxidative stress. During ISR, ATF4 translation is induced via an alternative ribosome translation re-initiation mechanism in response to EIF2S1/eIF-2-alpha phosphorylation, and stress-induced ATF4 acts as a master transcription factor of stress-responsive genes in order to promote cell recovery. Promotes the transcription of genes linked to amino acid sufficiency and resistance to oxidative stress to protect cells against metabolic consequences of ER oxidation. Activates the transcription of NLRP1, possibly in concert with other factors in response to ER stress. Activates the transcription of asparagine synthetase (ASNS) in response to amino acid deprivation or ER stress. However, when associated with DDIT3/CHOP, the transcriptional activation of the ASNS gene is inhibited in response to amino acid deprivation. Together with DDIT3/CHOP, mediates programmed cell death by promoting the expression of genes involved in cellular amino acid metabolic processes, mRNA translation and the terminal unfolded protein response (terminal UPR), a cellular response that elicits programmed cell death when ER stress is prolonged and unresolved. Activates the expression of COX7A2L/SCAF1 downstream of the EIF2AK3/PERK-mediated unfolded protein response, thereby promoting formation of respiratory chain supercomplexes and increasing mitochondrial oxidative phosphorylation. Together with DDIT3/CHOP, activates the transcription of the IRS-regulator TRIB3 and promotes ER stress-induced neuronal cell death by regulating the expression of BBC3/PUMA in response to ER stress. May cooperate with the UPR transcriptional regulator QRICH1 to regulate ER protein homeostasis which is critical for cell viability in response to ER stress. In the absence of stress, ATF4 translation is at low levels and it is required for normal metabolic processes such as embryonic lens formation, fetal liver hematopoiesis, bone development and synaptic plasticity. Acts as a regulator of osteoblast differentiation in response to phosphorylation by RPS6KA3/RSK2: phosphorylation in osteoblasts enhances transactivation activity and promotes expression of osteoblast-specific genes and post-transcriptionally regulates the synthesis of Type I collagen, the main constituent of the bone matrix. Cooperates with FOXO1 in osteoblasts to regulate glucose homeostasis through suppression of beta-cell production and decrease in insulin production. Activates transcription of SIRT4. Regulates the circadian expression of the core clock component PER2 and the serotonin transporter SLC6A4. Binds in a circadian time-dependent manner to the cAMP response elements (CRE) in the SLC6A4 and PER2 promoters and periodically activates the transcription of these genes. Mainly acts as a transcriptional activator in cellular stress adaptation, but it can also act as a transcriptional repressor: acts as a regulator of synaptic plasticity by repressing transcription, thereby inhibiting induction and maintenance of long-term memory. Regulates synaptic functions via interaction with DISC1 in neurons, which inhibits ATF4 transcription factor activity by disrupting ATF4 dimerization and DNA-binding. This chain is Cyclic AMP-dependent transcription factor ATF-4, found in Rattus norvegicus (Rat).